The chain runs to 184 residues: Large ribosomal subunit protein uL6 (184 aa).

Belongs to the universal ribosomal protein uL6 family. As to quaternary structure, part of the 50S ribosomal subunit.

In terms of biological role, this protein binds to the 23S rRNA, and is important in its secondary structure. It is located near the subunit interface in the base of the L7/L12 stalk, and near the tRNA binding site of the peptidyltransferase center. This chain is Large ribosomal subunit protein uL6, found in Thermotoga maritima (strain ATCC 43589 / DSM 3109 / JCM 10099 / NBRC 100826 / MSB8).